We begin with the raw amino-acid sequence, 565 residues long: NAD-dependent malic enzyme (565 aa).

Tyr-104 acts as the Proton donor in catalysis. Arg-157 lines the NAD(+) pocket. The active-site Proton acceptor is the Lys-175. A divalent metal cation is bound by residues Glu-246, Asp-247, and Asp-270. Asp-270 and Asn-418 together coordinate NAD(+).

The protein belongs to the malic enzymes family. As to quaternary structure, homotetramer. Mg(2+) is required as a cofactor. It depends on Mn(2+) as a cofactor.

The catalysed reaction is (S)-malate + NAD(+) = pyruvate + CO2 + NADH. It carries out the reaction oxaloacetate + H(+) = pyruvate + CO2. This Shigella flexneri serotype 5b (strain 8401) protein is NAD-dependent malic enzyme.